The following is a 224-amino-acid chain: 7-cyano-7-deazaguanine synthase (224 aa).

8–18 contributes to the ATP binding site; sequence CSGGLDSTVAA. C190, C198, C201, and C204 together coordinate Zn(2+).

The protein belongs to the QueC family. Zn(2+) serves as cofactor.

The enzyme catalyses 7-carboxy-7-deazaguanine + NH4(+) + ATP = 7-cyano-7-deazaguanine + ADP + phosphate + H2O + H(+). The protein operates within purine metabolism; 7-cyano-7-deazaguanine biosynthesis. Its function is as follows. Catalyzes the ATP-dependent conversion of 7-carboxy-7-deazaguanine (CDG) to 7-cyano-7-deazaguanine (preQ(0)). This Methanothrix thermoacetophila (strain DSM 6194 / JCM 14653 / NBRC 101360 / PT) (Methanosaeta thermophila) protein is 7-cyano-7-deazaguanine synthase.